Reading from the N-terminus, the 92-residue chain is Small ribosomal subunit protein uS19c (92 aa).

It belongs to the universal ribosomal protein uS19 family.

Its subcellular location is the plastid. In terms of biological role, protein S19 forms a complex with S13 that binds strongly to the 16S ribosomal RNA. This Cuscuta exaltata (Tall dodder) protein is Small ribosomal subunit protein uS19c.